Consider the following 683-residue polypeptide: Multidrug resistance protein MdtO (683 aa).

9 helical membrane passes run 43-63 (VILI…AVLF), 75-95 (FVAI…FLIY), 100-120 (GEPL…MFLM), 125-145 (LGLV…FPAM), 158-178 (WCIV…VLWF), 402-422 (FGGA…VMPW), 426-446 (IVEL…IATS), 457-477 (MVVT…YDLV), and 483-503 (ALGI…VWPE).

The protein belongs to the MdtO family. Could be part of a tripartite efflux system composed of MdtN, MdtO and MdtP.

The protein resides in the cell inner membrane. In terms of biological role, could be involved in resistance to puromycin, acriflavine and tetraphenylarsonium chloride. In Escherichia coli (strain K12), this protein is Multidrug resistance protein MdtO (mdtO).